The primary structure comprises 364 residues: MAQQWSLQRLAGRHPQDSYEDSTQSSIFTYTNSNSTRGPFEGPNYHIAPRWVYHLTSVWMIFVVTASVFTNGLVLAATMKFKKLRHPLNWILVNLAVADLAETVIASTISIVNQVSGYFVLGHPMCVLEGYTVSLCGITGLWSLAIISWERWMVVCKPFGNVRFDAKLAIVGIAFSWIWAAVWTAPPIFGWSRYWPHGLKTSCGPDVFSGSSYPGVQSYMIVLMVTCCIIPLAIIMLCYLQVWLAIRAVAKQQKESESTQKAEKEVTRMVVVMIFAYCVCWGPYTFFACFAAANPGYAFHPLMAALPAYFAKSATIYNPVIYVFMNRQFRNCILQLFGKKVDDGSELSSASKTEVSSVSSVSPA.

A disordered region spans residues 1 to 23 (MAQQWSLQRLAGRHPQDSYEDST). Residues 1 to 52 (MAQQWSLQRLAGRHPQDSYEDSTQSSIFTYTNSNSTRGPFEGPNYHIAPRWV) lie on the Extracellular side of the membrane. Residue serine 22 is glycosylated (O-linked (GlcNAc) serine). Residue asparagine 34 is glycosylated (N-linked (GlcNAc...) asparagine). A helical membrane pass occupies residues 53 to 77 (YHLTSVWMIFVVTASVFTNGLVLAA). At 78 to 89 (TMKFKKLRHPLN) the chain is on the cytoplasmic side. Residues 90–115 (WILVNLAVADLAETVIASTISIVNQV) traverse the membrane as a helical segment. Over 116–129 (SGYFVLGHPMCVLE) the chain is Extracellular. The cysteines at positions 126 and 203 are disulfide-linked. The helical transmembrane segment at 130–149 (GYTVSLCGITGLWSLAIISW) threads the bilayer. Residues 150–168 (ERWMVVCKPFGNVRFDAKL) lie on the Cytoplasmic side of the membrane. Residues 169–192 (AIVGIAFSWIWAAVWTAPPIFGWS) form a helical membrane-spanning segment. The Extracellular segment spans residues 193–218 (RYWPHGLKTSCGPDVFSGSSYPGVQS). Residues 219–246 (YMIVLMVTCCIIPLAIIMLCYLQVWLAI) form a helical membrane-spanning segment. Residues 247-268 (RAVAKQQKESESTQKAEKEVTR) are Cytoplasmic-facing. A helical membrane pass occupies residues 269–292 (MVVVMIFAYCVCWGPYTFFACFAA). At 293–300 (ANPGYAFH) the chain is on the extracellular side. A helical membrane pass occupies residues 301–325 (PLMAALPAYFAKSATIYNPVIYVFM). At lysine 312 the chain carries N6-(retinylidene)lysine. The Cytoplasmic portion of the chain corresponds to 326–364 (NRQFRNCILQLFGKKVDDGSELSSASKTEVSSVSSVSPA).

It belongs to the G-protein coupled receptor 1 family. Opsin subfamily. Phosphorylated on some or all of the serine and threonine residues present in the C-terminal region. As to expression, the three color pigments are found in the cone photoreceptor cells.

It localises to the membrane. Functionally, visual pigments are the light-absorbing molecules that mediate vision. They consist of an apoprotein, opsin, covalently linked to cis-retinal. The chain is Long-wave-sensitive opsin 1 (OPN1LW) from Homo sapiens (Human).